A 204-amino-acid polypeptide reads, in one-letter code: MDKVLFLLFVLSLGVSSQPITDSQRLFSIAVSRVQHLHLLAQRLFTDFESSLQIEEQRQLNKIFLQDFCNSDYIISPIDKHETQRSSVLKLLSISYRLIESWEFPSRSLYGGSAQRYQISPKLSELMRGIQLLIKANQDGAEMFSDGVVPQLAPYGNYYQSLGEDESLRRSYELLACFKKDMHKVETYLTVAKCRLSPEANCTL.

The signal sequence occupies residues 1 to 17 (MDKVLFLLFVLSLGVSS). Glutamine 18 bears the Pyrrolidone carboxylic acid mark. Zn(2+) is bound at residue histidine 36. A disulfide bond links cysteine 69 and cysteine 177. Glutamate 186 contacts Zn(2+). A disulfide bond links cysteine 194 and cysteine 202.

This sequence belongs to the somatotropin/prolactin family.

It localises to the secreted. Its function is as follows. Growth hormone plays an important role in growth control and is involved in the regulation of several anabolic processes. Implicated as an osmoregulatory substance important for seawater adaptation. The polypeptide is Somatotropin (gh) (Trichopodus trichopterus (Three spot gourami)).